Here is a 222-residue protein sequence, read N- to C-terminus: Eukaryotic translation initiation factor 3 subunit K (222 aa).

In terms of domain architecture, PCI spans 46-208 (YDLEANLAVL…KIKTKNITEK (163 aa)).

This sequence belongs to the eIF-3 subunit K family. In terms of assembly, component of the eukaryotic translation initiation factor 3 (eIF-3) complex. The eIF-3 complex interacts with pix.

It is found in the cytoplasm. Its function is as follows. Component of the eukaryotic translation initiation factor 3 (eIF-3) complex, which is involved in protein synthesis of a specialized repertoire of mRNAs and, together with other initiation factors, stimulates binding of mRNA and methionyl-tRNAi to the 40S ribosome. The eIF-3 complex specifically targets and initiates translation of a subset of mRNAs involved in cell proliferation. This is Eukaryotic translation initiation factor 3 subunit K from Drosophila yakuba (Fruit fly).